The following is a 180-amino-acid chain: ATP-dependent protease subunit HslV (180 aa).

The active site involves T2. Na(+) contacts are provided by G157, C160, and T163.

The protein belongs to the peptidase T1B family. HslV subfamily. In terms of assembly, a double ring-shaped homohexamer of HslV is capped on each side by a ring-shaped HslU homohexamer. The assembly of the HslU/HslV complex is dependent on binding of ATP.

The protein resides in the cytoplasm. The enzyme catalyses ATP-dependent cleavage of peptide bonds with broad specificity.. Allosterically activated by HslU binding. Functionally, protease subunit of a proteasome-like degradation complex believed to be a general protein degrading machinery. The sequence is that of ATP-dependent protease subunit HslV from Tolumonas auensis (strain DSM 9187 / NBRC 110442 / TA 4).